The following is a 167-amino-acid chain: Alpha-crystallin A chain (167 aa).

Position 1 is an N-acetylmethionine (Met-1). Positions 47 to 158 constitute a sHSP domain; that stretch reads YYRQSFFRGF…GERPIPVSRE (112 aa). The Zn(2+) site is built by His-94, Glu-96, His-101, and His-148. The disordered stretch occupies residues 143–167; sequence SLDSSHGERPIPVSREEKPTSAPSS. A compositionally biased stretch (basic and acidic residues) spans 147–161; the sequence is SHGERPIPVSREEKP. A glycan (O-linked (GlcNAc) serine) is linked at Ser-156.

The protein belongs to the small heat shock protein (HSP20) family. In terms of assembly, heteropolymer composed of three CRYAA and one CRYAB subunits. Inter-subunit bridging via zinc ions enhances stability, which is crucial as there is no protein turn over in the lens. Can also form homodimers and homotetramers (dimers of dimers) which serve as the building blocks of homooligomers. Within homooligomers, the zinc-binding motif is created from residues of 3 different molecules. His-94 and Glu-96 from one molecule are ligands of the zinc ion, and His-101 and His-148 residues from additional molecules complete the site with tetrahedral coordination geometry.

The protein localises to the cytoplasm. It localises to the nucleus. Its function is as follows. Contributes to the transparency and refractive index of the lens. May act as a chaperone, preventing aggregation of various proteins under a wide range of stress conditions. The chain is Alpha-crystallin A chain (CRYAA) from Pelophylax lessonae (Pool frog).